The following is a 421-amino-acid chain: UDP-N-acetylglucosamine 1-carboxyvinyltransferase (421 aa).

Residue 23–24 (KN) participates in phosphoenolpyruvate binding. Arg-92 provides a ligand contact to UDP-N-acetyl-alpha-D-glucosamine. The active-site Proton donor is the Cys-116. Cys-116 carries the post-translational modification 2-(S-cysteinyl)pyruvic acid O-phosphothioketal. UDP-N-acetyl-alpha-D-glucosamine is bound by residues 121–125 (RPVDL), 161–164 (KVSV), Asp-306, and Ile-328.

The protein belongs to the EPSP synthase family. MurA subfamily.

The protein resides in the cytoplasm. It catalyses the reaction phosphoenolpyruvate + UDP-N-acetyl-alpha-D-glucosamine = UDP-N-acetyl-3-O-(1-carboxyvinyl)-alpha-D-glucosamine + phosphate. It functions in the pathway cell wall biogenesis; peptidoglycan biosynthesis. Its function is as follows. Cell wall formation. Adds enolpyruvyl to UDP-N-acetylglucosamine. In Vibrio vulnificus (strain CMCP6), this protein is UDP-N-acetylglucosamine 1-carboxyvinyltransferase.